The primary structure comprises 276 residues: Cholesterol 25-hydroxylase-like protein 1, member 2 (276 aa).

N-linked (GlcNAc...) asparagine glycosylation occurs at asparagine 30. The next 3 helical transmembrane spans lie at 39-59, 90-110, and 126-146; these read LFPVVLTVSSYFVLVLPYLSC, GVTLYNHILLVIPAAVAQWMW, and LVGGVTGNLLLFDLQYFIWHF. In terms of domain architecture, Fatty acid hydroxylase spans 134-265; sequence LLLFDLQYFI…FSHWDKMFGT (132 aa). Residues 144-148 carry the Histidine box-1 motif; that stretch reads WHFLH. The Histidine box-2 signature appears at 159–163; it reads HAIHH. Residue asparagine 164 is glycosylated (N-linked (GlcNAc...) asparagine). A run of 2 helical transmembrane segments spans residues 175 to 195 and 199 to 219; these read CLGGWELVTVGFWTTLNPVLL and LLTTWMFMVVHVYVSVEDHCG. The Histidine box-3 signature appears at 240-246; the sequence is KHDVHHQ.

It belongs to the sterol desaturase family. Fe cation serves as cofactor.

It is found in the endoplasmic reticulum membrane. Functionally, may catalyze the formation of 25-hydroxycholesterol from cholesterol. The sequence is that of Cholesterol 25-hydroxylase-like protein 1, member 2 from Danio rerio (Zebrafish).